We begin with the raw amino-acid sequence, 379 residues long: MANLRKTHPLLKIANDALVDLPTPSNISAWWNFGSLLGLCLISQILTGLFLAMHYTSDISTAFSSVAHICRDVNYGWLIRNLHANGASFFFICLYLHIARGLYYGSYLYKETWNIGVVLFLLVMMTAFVGYVLPWGQMSFWGATVITNLLSAVPYVGNSLVQWIWGGFSVDNATLTRFFAFHFLFPFVVAGATMIHLLFLHETGSNNPVGLNSDADKIPFHPYFSYKDLLGFIIMLTALTMLALFYPNLLGDPDNFTPANPMVTPPHIKPEWYFLFAYAILRSIPNKLGGVLALLSSILVLMVVPILHTSKQRGLTFRPASQLLFWILVADMLVLTWIGGMPVEHPYIIIGQVASVLYFSLFLVLNPLVGWLENKMMNW.

4 consecutive transmembrane segments (helical) span residues 33 to 53 (FGSL…FLAM), 77 to 98 (WLIR…YLHI), 113 to 133 (WNIG…GYVL), and 178 to 198 (FFAF…IHLL). The heme b site is built by His83 and His97. Heme b contacts are provided by His182 and His196. Position 201 (His201) interacts with a ubiquinone. 4 helical membrane-spanning segments follow: residues 226-246 (YKDL…ALFY), 288-308 (LGGV…PILH), 320-340 (ASQL…WIGG), and 347-367 (YIII…VLNP).

The protein belongs to the cytochrome b family. As to quaternary structure, the cytochrome bc1 complex contains 3 respiratory subunits (MT-CYB, CYC1 and UQCRFS1), 2 core proteins (UQCRC1 and UQCRC2) and probably 6 low-molecular weight proteins. The cofactor is heme b.

Its subcellular location is the mitochondrion inner membrane. Component of the ubiquinol-cytochrome c reductase complex (complex III or cytochrome b-c1 complex) that is part of the mitochondrial respiratory chain. The b-c1 complex mediates electron transfer from ubiquinol to cytochrome c. Contributes to the generation of a proton gradient across the mitochondrial membrane that is then used for ATP synthesis. This chain is Cytochrome b (mt-cyb), found in Anguilla reinhardtii (Speckled longfin eel).